The chain runs to 549 residues: Probable glucomannan 4-beta-mannosyltransferase 4 (549 aa).

Residues 35 to 55 (VAPVLQFAVWACMAMSVMLVL) traverse the membrane as a helical segment. D151 is a catalytic residue. The substrate site is built by D210 and D212. D304 is a catalytic residue. The next 4 membrane-spanning stretches (helical) occupy residues 383–403 (VVAP…SVMV), 406–426 (VSIP…MNAI), 497–517 (IYIP…YDLV), and 523–543 (YYLY…GFAG).

This sequence belongs to the glycosyltransferase 2 family. Plant cellulose synthase-like A subfamily.

It is found in the golgi apparatus membrane. The enzyme catalyses GDP-mannose + (glucomannan)n = GDP + (glucomannan)n+1.. In terms of biological role, probable mannan synthase which consists of a 4-beta-mannosyltransferase activity on mannan using GDP-mannose. The beta-1,4-mannan product is the backbone for galactomannan synthesis by galactomannan galactosyltransferase. Galactomannan is a noncellulosic polysaccharides of plant cell wall. The protein is Probable glucomannan 4-beta-mannosyltransferase 4 of Oryza sativa subsp. japonica (Rice).